Reading from the N-terminus, the 285-residue chain is MSLQQKIKAYLKLGKLGVVSLLDLAAVAGAFLAYKHGISLLPIIPMFIGGTLASMGAMIINSGIEIDRDKVMSRTSKRPTVVGYVNRKEAIIVGSLLAILGTALGFIDNILTAFFIALGVVIYIFVYTILLKPRTWLNIVIGGFAGSAAAWAGYTSLTNSLTLEGFLLGFLIFMWTPGHFWSLALKYREDYVNAHYPMLPAVVGITTSARAIAISNTLMIPIVLLLGYYINLIALIAFSILSLFLMFLSYRLILNPTKEEAIKSFIFSNIYLMLILLIMIIVKLI.

The next 9 helical transmembrane spans lie at 13–33 (LGKLGVVSLLDLAAVAGAFLA), 40–60 (LLPIIPMFIGGTLASMGAMII), 89–109 (EAIIVGSLLAILGTALGFIDN), 110–130 (ILTAFFIALGVVIYIFVYTIL), 137–157 (LNIVIGGFAGSAAAWAGYTSL), 165–185 (GFLLGFLIFMWTPGHFWSLAL), 194–214 (AHYPMLPAVVGITTSARAIAI), 218–238 (LMIPIVLLLGYYINLIALIAF), and 265–285 (FIFSNIYLMLILLIMIIVKLI).

This sequence belongs to the UbiA prenyltransferase family. Protoheme IX farnesyltransferase subfamily.

The protein resides in the cell membrane. The catalysed reaction is heme b + (2E,6E)-farnesyl diphosphate + H2O = Fe(II)-heme o + diphosphate. It functions in the pathway porphyrin-containing compound metabolism; heme O biosynthesis; heme O from protoheme: step 1/1. Its function is as follows. Converts heme B (protoheme IX) to heme O by substitution of the vinyl group on carbon 2 of heme B porphyrin ring with a hydroxyethyl farnesyl side group. In Saccharolobus islandicus (strain Y.G.57.14 / Yellowstone #1) (Sulfolobus islandicus), this protein is Protoheme IX farnesyltransferase.